The primary structure comprises 100 residues: DNA base-flipping protein (100 aa).

The protein belongs to the MGMT family. ATL subfamily.

Functionally, involved in DNA damage recognition. Binds DNA containing O(6)-methylguanine. Binds to the damaged base and flips the base out of the DNA duplex into an extrahelical conformation, which allows processing by repair proteins. In Vibrio parahaemolyticus serotype O3:K6 (strain AQ3810), this protein is DNA base-flipping protein.